The primary structure comprises 206 residues: Guanylyl cyclase inhibitory protein (206 aa).

Residue Gly2 is the site of N-myristoyl glycine attachment. EF-hand domains are found at residues Ser31 to Gly49, Asn51 to Gly86, Thr87 to Met122, and Thr135 to Val170. Residues Asp64, Asn66, Asp68, Glu75, Asp100, Asp102, Asp104, and Glu111 each coordinate Ca(2+).

As to expression, retina; inner segments, somata and synaptic terminals of cone receptors.

Does not stimulate guanylyl cyclase (GC) when free calcium ion concentration is low, but inhibits GC when free calcium ions concentration is elevated. In Lithobates pipiens (Northern leopard frog), this protein is Guanylyl cyclase inhibitory protein (GCIP).